A 1016-amino-acid polypeptide reads, in one-letter code: KN motif and ankyrin repeat domain-containing protein 4 (1016 aa).

Disordered stretches follow at residues 1 to 26 (MEKIDGKDQSSQGDEEKEPPKSYPYS), 70 to 91 (PRNFSLPNSGDRTYAVPPQQNW), 235 to 259 (AEPEEGDLKASSHLSQPGPSSAVQS), 401 to 485 (LSQE…LPRG), 506 to 563 (EEGS…SPQD), and 622 to 755 (AQAP…VSHL). Polar residues-rich tracts occupy residues 70 to 80 (PRNFSLPNSGD) and 246 to 258 (SHLSQPGPSSAVQ). A coiled-coil region spans residues 346–409 (SSLKNQVLAL…KLSQERASEA (64 aa)). Composition is skewed to basic and acidic residues over residues 401–414 (LSQERASEAPDRTD) and 445–454 (PECRAPRAEK). Over residues 460 to 469 (VQNNHKQSYP) the composition is skewed to polar residues. Residues 632–650 (TPAPPPSTPPPPPPPPPEI) are compositionally biased toward pro residues. Thr639 bears the Phosphothreonine mark. Over residues 695-708 (TSGEDSSPEDLSDS) the composition is skewed to acidic residues. Composition is skewed to basic and acidic residues over residues 709-727 (ETEKKQDCSESREDRDLHP) and 745-755 (TSDRGEEVSHL). ANK repeat units lie at residues 838-868 (SGNTALHYSVSHSNFAIVKLLLDTGVCNVDH), 877-905 (VMITPLASAETKEDMAVVWKLLREGNVNI), 910-939 (GGQTALMLGVSHDREDMVQALLSCQADVNL), 943-973 (DGSSALMLACHQGNADLVRLLLAHPACNSSL), and 977-1007 (AGRTALSLVLNSPAHVEIAELLRAHSEPGRS).

It localises to the cytoplasm. Its function is as follows. May be involved in the control of cytoskeleton formation by regulating actin polymerization. The polypeptide is KN motif and ankyrin repeat domain-containing protein 4 (Kank4) (Mus musculus (Mouse)).